The chain runs to 85 residues: Neurotoxin BmKAEP2 (85 aa).

Positions 1–21 (MKLFLLLVISASMLIDGLVNA) are cleaved as a signal peptide. One can recognise an LCN-type CS-alpha/beta domain in the interval 22–82 (DGYIRGSNGC…TWKSESNTCG (61 aa)). Intrachain disulfides connect cysteine 31/cysteine 81, cysteine 35/cysteine 56, cysteine 42/cysteine 63, and cysteine 46/cysteine 65.

The protein belongs to the long (4 C-C) scorpion toxin superfamily. Sodium channel inhibitor family. Beta subfamily. As to expression, expressed by the venom gland.

The protein resides in the secreted. In terms of biological role, depressant insect beta-toxins cause a transient contraction paralysis followed by a slow flaccid paralysis. They bind voltage-independently at site-4 of sodium channels (Nav) and shift the voltage of activation toward more negative potentials thereby affecting sodium channel activation and promoting spontaneous and repetitive firing. This toxin is active only on insects. Has potential anti-epilepsy effect. The sequence is that of Neurotoxin BmKAEP2 from Olivierus martensii (Manchurian scorpion).